The primary structure comprises 158 residues: Photosystem I assembly protein Ycf3 (158 aa).

TPR repeat units lie at residues 35–68, 72–105, and 113–146; these read AFSY…EEDV, SYII…NPRL, and AVIY…APGQ.

This sequence belongs to the Ycf3 family.

It is found in the plastid. The protein localises to the chloroplast thylakoid membrane. Functionally, essential for the assembly of the photosystem I (PSI) complex. May act as a chaperone-like factor to guide the assembly of the PSI subunits. This chain is Photosystem I assembly protein Ycf3, found in Cyanidioschyzon merolae (strain NIES-3377 / 10D) (Unicellular red alga).